The primary structure comprises 804 residues: Leucine--tRNA ligase (804 aa).

Positions 40-51 (PYPSGAGLHVGH) match the 'HIGH' region motif. A 'KMSKS' region motif is present at residues 576-580 (KMSKS). Residue K579 participates in ATP binding.

It belongs to the class-I aminoacyl-tRNA synthetase family.

It is found in the cytoplasm. The catalysed reaction is tRNA(Leu) + L-leucine + ATP = L-leucyl-tRNA(Leu) + AMP + diphosphate. The sequence is that of Leucine--tRNA ligase from Staphylococcus epidermidis (strain ATCC 35984 / DSM 28319 / BCRC 17069 / CCUG 31568 / BM 3577 / RP62A).